The following is a 20-amino-acid chain: Small ribosomal subunit protein bS20 (20 aa).

The protein belongs to the bacterial ribosomal protein bS20 family.

Its function is as follows. Binds directly to 16S ribosomal RNA. This chain is Small ribosomal subunit protein bS20 (rpsT), found in Brevundimonas diminuta (Pseudomonas diminuta).